A 188-amino-acid chain; its full sequence is dCTP deaminase (188 aa).

DCTP-binding positions include 111–116 (KSTYAR), 135–137 (TLE), Gln-156, Tyr-170, Lys-179, and Gln-180. Glu-137 functions as the Proton donor/acceptor in the catalytic mechanism.

Belongs to the dCTP deaminase family. Homotrimer.

It carries out the reaction dCTP + H2O + H(+) = dUTP + NH4(+). The protein operates within pyrimidine metabolism; dUMP biosynthesis; dUMP from dCTP (dUTP route): step 1/2. Its function is as follows. Catalyzes the deamination of dCTP to dUTP. The polypeptide is dCTP deaminase (Rickettsia bellii (strain OSU 85-389)).